A 624-amino-acid polypeptide reads, in one-letter code: MIYKAGSYEVIVIGAGHAGCEAALASARMGCQTLLVTMSIDHIALMPCNPSIGGPAKAQVVREIDALGGEMALNIDKANVQIRTINTGKGPAVQALRAQADKRQYHLEMLKTLFNQKKLDILMAEVEDIELSAGRVKAIVTRTGARFECQALVLTTGTYLKGRIIVGDISFDGGPGNQFPAARLSESLKRMGLRLGRFKTGTPPRIDSKSVDFSKMIEQPGDKRPLRFSFISPLINRPQLPCWLTHSNKKTHQIVMNNLDRAPMYTGIIKGIGTRYCPSFEDKVVRFSHKDSHQLFIEPEGRDTDEMYVQGLNTSLPEDVQIEVLKSIPGLENVRIMRTGYAIEYDIIYPSQLKLSLECKTVEGLFTAGQINGTSGYEEAAAQGLIAGINAALQVKEKEPFILKRSEAYIAVMIDDLINKEIVEPYRLLTSRAEYRLLLRQDNADLRLTEKGRQIGLVDDNRWMAYQQKEEILEVESNELKFSSFTPADEEMADFLSGKNTAAIRDRVSLWELLRRPELSIYDYVEKGWLRDNDPDILEQLEIQAKYEGYIEKQKEQVKRFEKLENKMIPPDINYDEVYGLSQEAVQKLKIILPASVGQASRIAGVNPADINVLLIFLEKKRRK.

14–19 (GAGHAG) is an FAD binding site. NAD(+) is bound at residue 273–287 (GTRYCPSFEDKVVRF).

Belongs to the MnmG family. As to quaternary structure, homodimer. Heterotetramer of two MnmE and two MnmG subunits. FAD is required as a cofactor.

It localises to the cytoplasm. Its function is as follows. NAD-binding protein involved in the addition of a carboxymethylaminomethyl (cmnm) group at the wobble position (U34) of certain tRNAs, forming tRNA-cmnm(5)s(2)U34. The protein is tRNA uridine 5-carboxymethylaminomethyl modification enzyme MnmG of Syntrophomonas wolfei subsp. wolfei (strain DSM 2245B / Goettingen).